Consider the following 1188-residue polypeptide: Phospholipid-transporting ATPase IB (1188 aa).

Topologically, residues methionine 1–arginine 94 are cytoplasmic. Residue threonine 45 is modified to Phosphothreonine. The helical transmembrane segment at alanine 95–threonine 115 threads the bilayer. At glycine 116–threonine 119 the chain is on the extracellular side. A helical membrane pass occupies residues threonine 120 to phenylalanine 140. The Cytoplasmic portion of the chain corresponds to lysine 141 to glutamine 316. Residues isoleucine 317 to tyrosine 337 traverse the membrane as a helical segment. Topologically, residues tryptophan 338–leucine 364 are extracellular. A helical transmembrane segment spans residues threonine 365 to valine 385. The Cytoplasmic segment spans residues lysine 386–valine 887. The 4-aspartylphosphate intermediate role is filled by aspartate 428. 12 residues coordinate ATP: aspartate 428, lysine 429, threonine 430, glutamate 528, phenylalanine 569, lysine 592, arginine 625, threonine 705, glycine 706, aspartate 707, arginine 795, and lysine 801. Residue aspartate 428 coordinates Mg(2+). Mg(2+) is bound at residue threonine 430. Aspartate 821 lines the Mg(2+) pocket. Asparagine 824 and aspartate 825 together coordinate ATP. Aspartate 825 provides a ligand contact to Mg(2+). A helical transmembrane segment spans residues valine 888–phenylalanine 908. Over glutamate 909–arginine 910 the chain is Extracellular. Residues tryptophan 911–phenylalanine 931 traverse the membrane as a helical segment. Over glutamate 932–lysine 959 the chain is Cytoplasmic. The helical transmembrane segment at valine 960–methionine 980 threads the bilayer. Residues lysine 981–tyrosine 997 are Extracellular-facing. A helical membrane pass occupies residues leucine 998–leucine 1018. The Cytoplasmic portion of the chain corresponds to glutamate 1019 to histidine 1028. The chain crosses the membrane as a helical span at residues leucine 1029–tryptophan 1049. At proline 1050–threonine 1063 the chain is on the extracellular side. Residues methionine 1064–isoleucine 1084 form a helical membrane-spanning segment. Over glutamate 1085–lysine 1188 the chain is Cytoplasmic. The disordered stretch occupies residues serine 1162 to lysine 1188. Residues glutamine 1163–lysine 1182 are compositionally biased toward basic and acidic residues.

It belongs to the cation transport ATPase (P-type) (TC 3.A.3) family. Type IV subfamily. In terms of assembly, component of a P4-ATPase flippase complex which consists of a catalytic alpha subunit and an accessory beta subunit. Interacts with TMEM30A to form a flippase complex. It depends on Mg(2+) as a cofactor. In terms of tissue distribution, strongly expressed in the brain, cerebellum, retina and testis.

Its subcellular location is the membrane. It is found in the golgi apparatus membrane. It localises to the endosome membrane. The protein resides in the cell membrane. The protein localises to the photoreceptor outer segment membrane. Its subcellular location is the photoreceptor inner segment membrane. It carries out the reaction ATP + H2O + phospholipidSide 1 = ADP + phosphate + phospholipidSide 2.. It catalyses the reaction a 1,2-diacyl-sn-glycero-3-phospho-L-serine(out) + ATP + H2O = a 1,2-diacyl-sn-glycero-3-phospho-L-serine(in) + ADP + phosphate + H(+). The catalysed reaction is a 1,2-diacyl-sn-glycero-3-phosphoethanolamine(in) + ATP + H2O = a 1,2-diacyl-sn-glycero-3-phosphoethanolamine(out) + ADP + phosphate + H(+). In terms of biological role, catalytic component of a P4-ATPase flippase complex which catalyzes the hydrolysis of ATP coupled to the transport of aminophospholipids from the outer to the inner leaflet of various membranes and ensures the maintenance of asymmetric distribution of phospholipids. Able to translocate phosphatidylserine, but not phosphatidylcholine. Phospholipid translocation also seems to be implicated in vesicle formation and in uptake of lipid signaling molecules. Reconstituted to liposomes, the ATP8A2:TMEM30A flippase complex predominantly transports phosphatidylserine (PS) and to a lesser extent phosphatidylethanolamine (PE). Phospholipid translocation is not associated with a countertransport of an inorganic ion or other charged substrate from the cytoplasmic side toward the exoplasm in connection with the phosphorylation from ATP. ATP8A2:TMEM30A may be involved in regulation of neurite outgrowth. Proposed to function in the generation and maintenance of phospholipid asymmetry in photoreceptor disk membranes and neuronal axon membranes. May be involved in vesicle trafficking in neuronal cells. Required for normal visual and auditory function; involved in photoreceptor and inner ear spiral ganglion cell survival. In Homo sapiens (Human), this protein is Phospholipid-transporting ATPase IB.